A 487-amino-acid chain; its full sequence is N-succinylglutamate 5-semialdehyde dehydrogenase (487 aa).

An NAD(+)-binding site is contributed by 221-226; it reads GSSDTG. Residues glutamate 244 and cysteine 278 contribute to the active site.

This sequence belongs to the aldehyde dehydrogenase family. AstD subfamily.

The catalysed reaction is N-succinyl-L-glutamate 5-semialdehyde + NAD(+) + H2O = N-succinyl-L-glutamate + NADH + 2 H(+). It participates in amino-acid degradation; L-arginine degradation via AST pathway; L-glutamate and succinate from L-arginine: step 4/5. Catalyzes the NAD-dependent reduction of succinylglutamate semialdehyde into succinylglutamate. This is N-succinylglutamate 5-semialdehyde dehydrogenase from Paraburkholderia xenovorans (strain LB400).